Reading from the N-terminus, the 258-residue chain is Bidirectional sugar transporter SWEET9 (258 aa).

Residues 1-7 (MFLKVHE) lie on the Extracellular side of the membrane. Residues 8–28 (IAFLFGLLGNIVSFGVFLSPV) traverse the membrane as a helical segment. The 87-residue stretch at 10-96 (FLFGLLGNIV…FLYILYAPRE (87 aa)) folds into the MtN3/slv 1 domain. The Cytoplasmic segment spans residues 29-42 (PTFYGIYKKKSSKG). The helical transmembrane segment at 43 to 63 (FQSIPYICALASATLLLYYGI) threads the bilayer. Topologically, residues 64 to 69 (MKTHAY) are extracellular. A helical transmembrane segment spans residues 70-90 (LIISINTFGCFIEISYLFLYI). The Cytoplasmic segment spans residues 91–103 (LYAPREAKISTLK). A helical membrane pass occupies residues 104-124 (LIVICNIGGLGLLILLVNLLV). The Extracellular portion of the chain corresponds to 125-131 (PKQHRVS). Residues 132–152 (TVGWVCAAYSLAVFASPLSVM) traverse the membrane as a helical segment. In terms of domain architecture, MtN3/slv 2 spans 132 to 216 (TVGWVCAAYS…ILYMMYQGST (85 aa)). The Cytoplasmic segment spans residues 153–165 (RKVIKTKSVEYMP). Residues 166-186 (FLLSLSLTLNAVMWFFYGLLI) traverse the membrane as a helical segment. Residues 187-189 (KDK) are Extracellular-facing. The helical transmembrane segment at 190–210 (FIAMPNILGFLFGVAQMILYM) threads the bilayer. Over 211–258 (MYQGSTKTDLPTENQLANKTDVNEVPIVAVELPDVGSDNVEGSVRPMK) the chain is Cytoplasmic.

The protein belongs to the SWEET sugar transporter family. As to quaternary structure, forms heterooligomers with SWEET1, SWEET5, SWEET8, SWEET11, SWEET13, SWEET16 and SWEET17. Specifically expressed in nectaries, mostly in the lower half of nectary parenchyma.

It is found in the cell membrane. Its subcellular location is the cytoplasmic vesicle membrane. It localises to the golgi apparatus. The protein localises to the trans-Golgi network membrane. Mediates both low-affinity uptake and efflux of sugar across the plasma membrane. Nectary-specific sugar transporter required for nectar production by mediating the secretion of sucrose from the nectary parenchyma to the extracellular space. This is Bidirectional sugar transporter SWEET9 from Arabidopsis thaliana (Mouse-ear cress).